The sequence spans 144 residues: Large ribosomal subunit protein uL15 (144 aa).

The segment at methionine 1 to lysine 58 is disordered. The segment covering arginine 21–glycine 31 has biased composition (gly residues).

Belongs to the universal ribosomal protein uL15 family. As to quaternary structure, part of the 50S ribosomal subunit.

Functionally, binds to the 23S rRNA. The polypeptide is Large ribosomal subunit protein uL15 (Vibrio atlanticus (strain LGP32) (Vibrio splendidus (strain Mel32))).